Here is a 180-residue protein sequence, read N- to C-terminus: NADH-quinone oxidoreductase subunit I (180 aa).

2 consecutive 4Fe-4S ferredoxin-type domains span residues 46–80 (GRIV…LQKT) and 90–119 (EFFR…LTPD). The [4Fe-4S] cluster site is built by cysteine 60, cysteine 63, cysteine 66, cysteine 70, cysteine 99, cysteine 102, cysteine 105, and cysteine 109.

Belongs to the complex I 23 kDa subunit family. As to quaternary structure, NDH-1 is composed of 14 different subunits. Subunits NuoA, H, J, K, L, M, N constitute the membrane sector of the complex. It depends on [4Fe-4S] cluster as a cofactor.

Its subcellular location is the cell membrane. The catalysed reaction is a quinone + NADH + 5 H(+)(in) = a quinol + NAD(+) + 4 H(+)(out). Its function is as follows. NDH-1 shuttles electrons from NADH, via FMN and iron-sulfur (Fe-S) centers, to quinones in the respiratory chain. The immediate electron acceptor for the enzyme in this species is believed to be ubiquinone. Couples the redox reaction to proton translocation (for every two electrons transferred, four hydrogen ions are translocated across the cytoplasmic membrane), and thus conserves the redox energy in a proton gradient. The sequence is that of NADH-quinone oxidoreductase subunit I from Baumannia cicadellinicola subsp. Homalodisca coagulata.